We begin with the raw amino-acid sequence, 441 residues long: Acetyltransferase TRI7 (441 aa).

The next 7 membrane-spanning stretches (helical) occupy residues 14-34, 75-95, 158-178, 306-326, 336-356, 377-397, and 421-441; these read GILY…LIII, SLTL…LVLT, IWFI…LDII, IAFV…FCWG, LAFF…QALC, LVGY…YLYH, and TATM…GIEV.

This sequence belongs to the wax synthase family.

The protein localises to the membrane. Its pathway is sesquiterpene biosynthesis; trichothecene biosynthesis. Its function is as follows. Acetyltransferase; part of the core gene cluster that mediates the biosynthesis of trichothecenes, a very large family of chemically related bicyclic sesquiterpene compounds acting as mycotoxins, including T2-toxin. The biosynthesis of trichothecenes begins with the cyclization of farnesyl diphosphate to trichodiene and is catalyzed by the trichodiene synthase TRI5. Trichodiene undergoes a series of oxygenations catalyzed by the cytochrome P450 monooxygenase TRI4. TRI4 controls the addition of four oxygens at C-2, C-3, C-11, and the C-12, C-13-epoxide to form the intermediate isotrichotriol. Isotrichotriol then undergoes a non-enzymatic isomerization and cyclization to form isotrichodermol. During this process, the oxygen at the C-2 position becomes the pyran ring oxygen and the hydroxyl group at C-11 is lost. More complex type A trichothecenes are built by modifying isotrichodermol through a series of paired hydroxylation and acetylation or acylation steps. Isotrichodermol is converted to isotrichodermin by the acetyltransferase TRI101. TRI101 encodes a C-3 transacetylase that acts as a self-protection or resistance factor during biosynthesis and that the presence of a free C-3 hydroxyl group is a key component of Fusarium trichothecene phytotoxicity. A second hydroxyl group is added to C-15 by the trichothecene C-15 hydroxylase TRI11, producing 15-decalonectrin, which is then acetylated by TRI3, producing calonectrin. A third hydroxyl group is added at C-4 by the cytochrome P450 monooxygenase TRI13, converting calonectrin to 3,15-diacetoxyspirpenol, which is subsequently acetylated by the acetyltransferase TRI7. A fourth hydroxyl group is added to C-8 by the cytochrome P450 monooxygenase TRI1, followed by the addition of an isovaleryl moiety by TRI16. Finally, the acetyl group is removed from the C-3 position by the trichothecene C-3 esterase TRI8 to produce T-2 toxin. The sequence is that of Acetyltransferase TRI7 from Fusarium sporotrichioides.